The sequence spans 277 residues: Glycerol-3-phosphate acyltransferase (277 aa).

Transmembrane regions (helical) follow at residues 3-23 (LFIFLILVGYLMGSINSAIIV), 55-75 (IMVMVFDALKGILPVILAKLL), 79-99 (PVTVAFTALAAVVGHMYPVFF), 111-131 (IGALLAFHFVIGVMVAATWLL), and 155-175 (LILVGNLNIFPPLFMITILVL). Residues 207 to 277 (SPATSAEQEF…PKTKTVKEKE (71 aa)) form a disordered region. A compositionally biased stretch (basic and acidic residues) spans 216-239 (FPGKEVIDTNIDETEKTEQAEAVK). Basic residues-rich tracts occupy residues 240-253 (KPKVKKATTKAKKT) and 262-271 (KPKSTKPKTK).

This sequence belongs to the PlsY family. Probably interacts with PlsX.

It localises to the cell inner membrane. It catalyses the reaction an acyl phosphate + sn-glycerol 3-phosphate = a 1-acyl-sn-glycero-3-phosphate + phosphate. Its pathway is lipid metabolism; phospholipid metabolism. In terms of biological role, catalyzes the transfer of an acyl group from acyl-phosphate (acyl-PO(4)) to glycerol-3-phosphate (G3P) to form lysophosphatidic acid (LPA). This enzyme utilizes acyl-phosphate as fatty acyl donor, but not acyl-CoA or acyl-ACP. The chain is Glycerol-3-phosphate acyltransferase from Legionella pneumophila (strain Corby).